The chain runs to 440 residues: Xaa-Pro dipeptidase (440 aa).

Mn(2+) is bound by residues Asp-244, Asp-255, His-336, Glu-381, and Glu-420.

Belongs to the peptidase M24B family. Bacterial-type prolidase subfamily. It depends on Mn(2+) as a cofactor.

The catalysed reaction is Xaa-L-Pro dipeptide + H2O = an L-alpha-amino acid + L-proline. Splits dipeptides with a prolyl residue in the C-terminal position. The chain is Xaa-Pro dipeptidase from Pseudoalteromonas translucida (strain TAC 125).